The primary structure comprises 495 residues: Aspartyl/glutamyl-tRNA(Asn/Gln) amidotransferase subunit B (495 aa).

This sequence belongs to the GatB/GatE family. GatB subfamily. Heterotrimer of A, B and C subunits.

The enzyme catalyses L-glutamyl-tRNA(Gln) + L-glutamine + ATP + H2O = L-glutaminyl-tRNA(Gln) + L-glutamate + ADP + phosphate + H(+). The catalysed reaction is L-aspartyl-tRNA(Asn) + L-glutamine + ATP + H2O = L-asparaginyl-tRNA(Asn) + L-glutamate + ADP + phosphate + 2 H(+). Its function is as follows. Allows the formation of correctly charged Asn-tRNA(Asn) or Gln-tRNA(Gln) through the transamidation of misacylated Asp-tRNA(Asn) or Glu-tRNA(Gln) in organisms which lack either or both of asparaginyl-tRNA or glutaminyl-tRNA synthetases. The reaction takes place in the presence of glutamine and ATP through an activated phospho-Asp-tRNA(Asn) or phospho-Glu-tRNA(Gln). This is Aspartyl/glutamyl-tRNA(Asn/Gln) amidotransferase subunit B from Crocosphaera subtropica (strain ATCC 51142 / BH68) (Cyanothece sp. (strain ATCC 51142)).